We begin with the raw amino-acid sequence, 666 residues long: MGQTKSKIKSKYASYLSFIKILLKRGGVKVSTKNLIKLFQIIEQFCPWFPEQGTLDLKDWKRIGKELKQAGRKGNIIPLTVWNDWAIIKAALEPFQTEEDSISVSDAPGSGIIDCNEKTRKKSQKETESLHCEYVAEPVMAQSTQNVDYNQLQEVIYPETLKLEGKGPELVGPSESKPRGTSPLPAGQVPVTLQPQKQVKENKTQPPVAYQYWPPAELQYRPPPESQYGYPGMPPAPQGRAPYPQPPTRRLNPTAPPSRQGSELHEIIDKSRKEGDTEAWQFPVTLEPMPPGEGAQEGEPPTVEARYKSFSIKILKDMKEGVKQYGPNSPYMRTLLDSIAHGHRLIPYDWEILAKSSLSPSQFLQFKTWWIDGVQEQVRRNRAANPPVNIDADQLLGIGQNWSTISQQALMQNEAIEQVRAICLRAWEKIQDPGSTCPSFNTVRQGSKEPYPDFVARLQDVAQKSIADEKARKVIVELMAYENANPECQSAIKPLKGKVPAGSDVISEYVKACDGIGGAMHKAMLMAQAITGVVLGGQVRTFGGKCYNCGQIGHLKKNCPVLNKQNITIQATTTGREPPDLCPRCKKGKHWASQCRSKFDKNGQPLSGNEQRGQPQAPQQTGAFPIQPFVPQGFQGQQPPLSQVFQGISQLPQYNNCPPPQVAVQQ.

Residue glycine 2 is the site of N-myristoyl glycine attachment. Residues 165–264 are disordered; it reads GKGPELVGPS…APPSRQGSEL (100 aa). Positions 232-247 are enriched in pro residues; sequence GMPPAPQGRAPYPQPP. 2 consecutive CCHC-type zinc fingers follow at residues 544 to 561 and 580 to 597; these read GKCY…NCPV and DLCP…QCRS. The interval 598 to 641 is disordered; it reads KFDKNGQPLSGNEQRGQPQAPQQTGAFPIQPFVPQGFQGQQPPL. Residues 604-622 show a composition bias toward polar residues; it reads QPLSGNEQRGQPQAPQQTG. Residues 624–640 show a composition bias toward low complexity; that stretch reads FPIQPFVPQGFQGQQPP.

It belongs to the beta type-B retroviral Gag protein family. HERV class-II K(HML-2) gag subfamily. Myristoylation is essential for retroviral assembly. Alteration of the glycine residue leads to a block in the budding of particles and an accumulation of Gag inside the cell. Post-translationally, specific enzymatic cleavages may yield mature proteins.

The protein localises to the cell membrane. Functionally, the products of the Gag polyproteins of infectious retroviruses perform highly complex orchestrated tasks during the assembly, budding, maturation, and infection stages of the viral replication cycle. During viral assembly, the proteins form membrane associations and self-associations that ultimately result in budding of an immature virion from the infected cell. Gag precursors also function during viral assembly to selectively bind and package two plus strands of genomic RNA. Endogenous Gag proteins may have kept, lost or modified their original function during evolution. The sequence is that of Endogenous retrovirus group K member 9 Gag polyprotein (ERVK-9) from Homo sapiens (Human).